Reading from the N-terminus, the 276-residue chain is Diaminopimelate epimerase (276 aa).

Residues Asn13, Gln46, and Asn66 each contribute to the substrate site. Cys75 acts as the Proton donor in catalysis. Substrate is bound by residues 76–77, Asn159, Asn192, and 210–211; these read GN and ER. Residue Cys219 is the Proton acceptor of the active site. Residue 220–221 coordinates substrate; it reads GS.

Belongs to the diaminopimelate epimerase family. In terms of assembly, homodimer.

Its subcellular location is the cytoplasm. The enzyme catalyses (2S,6S)-2,6-diaminopimelate = meso-2,6-diaminopimelate. Its pathway is amino-acid biosynthesis; L-lysine biosynthesis via DAP pathway; DL-2,6-diaminopimelate from LL-2,6-diaminopimelate: step 1/1. In terms of biological role, catalyzes the stereoinversion of LL-2,6-diaminopimelate (L,L-DAP) to meso-diaminopimelate (meso-DAP), a precursor of L-lysine and an essential component of the bacterial peptidoglycan. This is Diaminopimelate epimerase from Vibrio parahaemolyticus serotype O3:K6 (strain RIMD 2210633).